The sequence spans 466 residues: MAKTLYEKLFDAHVVYEAQNETPLLYIDRHLVHEVTSPQAFDGLRAHGRPVRQPGKTFATMDHNVSTQTKDINASGEMARIQMQELIKNCKAFGVELYDLNHPYQGIVHVMGPEQGVTLPGMTIVCGDSHTATHGAFGALAFGIGTSEVEHVLATQTLKQGRAKTMKIEVKGTAAPGITAKDIVLAIIGKTGSAGGTGHVVEFCGEAIRNLSMEGRMTLCNMAIEMGAKAGLVAPDDTTFNYVKGRLHAPKGSDFDDAVAYWKTLKTDDGATFDTVVTLQAEDIAPQVTWGTNPGQVISVNDNIPDPASFADPVERASAEKALAYMGLKPGIPLTDVAIDKVFIGSCTNSRIEDLRAAAEIAKGRKVAPGVQALVVPGSGPVKAQAEAEGLDKIFIEAGFEWRLPGCSMCLAMNNDRLNPGERCASTSNRNFEGRQGRGGRTHLVSPAMAAAAAVTGHFADIRSIK.

[4Fe-4S] cluster contacts are provided by Cys347, Cys407, and Cys410.

The protein belongs to the aconitase/IPM isomerase family. LeuC type 1 subfamily. Heterodimer of LeuC and LeuD. The cofactor is [4Fe-4S] cluster.

The catalysed reaction is (2R,3S)-3-isopropylmalate = (2S)-2-isopropylmalate. It participates in amino-acid biosynthesis; L-leucine biosynthesis; L-leucine from 3-methyl-2-oxobutanoate: step 2/4. Catalyzes the isomerization between 2-isopropylmalate and 3-isopropylmalate, via the formation of 2-isopropylmaleate. In Citrobacter koseri (strain ATCC BAA-895 / CDC 4225-83 / SGSC4696), this protein is 3-isopropylmalate dehydratase large subunit.